Here is a 770-residue protein sequence, read N- to C-terminus: Jhy protein (770 aa).

Disordered regions lie at residues 1 to 249 (MNKY…SKQY), 295 to 438 (TVQN…SFVS), 493 to 527 (HRHE…PQAE), 595 to 647 (ESQL…KRDV), and 708 to 740 (DYAK…KEGG). A compositionally biased stretch (basic and acidic residues) spans 57–71 (SWSDIKDQIQDKDME). Residues 72-85 (PDSLEEDSPSETEE) show a composition bias toward acidic residues. Positions 112–134 (HQVEDKYSDLRYDPNWKNKREEG) are enriched in basic and acidic residues. Residues 218–229 (SGLSQYLKSSSS) are compositionally biased toward low complexity. Residues 295–314 (TVQNDKEVENTFMDPEDKWH) are compositionally biased toward basic and acidic residues. Residues 340–354 (RGQSSDAANGQQPSR) are compositionally biased toward polar residues. Basic residues predominate over residues 355–370 (RTAKARVRKQRKHQKG). Over residues 383-398 (QNNQNNPFQQPQNQRQ) the composition is skewed to low complexity. Residues 410-438 (AQTNASNPNLQDARTLTHNPKVTSDSFVS) show a composition bias toward polar residues. The span at 493 to 509 (HRHESPSQRAPQSDHHM) shows a compositional bias: basic and acidic residues. Composition is skewed to basic residues over residues 510–521 (NTHRSTKTKKPA) and 625–642 (GKRH…LKGY).

In terms of tissue distribution, expressed in the brain, specifically in hypothalamus, pineal gland, and ependymal cells of the aqueduct of Sylvius, as well as in the choroid plexus of the third ventricle. Expressed in the ependymal cells lining the lateral ventricles (at protein level).

Functionally, required for the normal development of cilia in brain ependymal cells lining the ventricular surfaces. The protein is Jhy protein of Mus musculus (Mouse).